The sequence spans 90 residues: MFKFSIPLLLFIFLFFSCINSITHIRVGAFYPPPAHLQPQSGFIWEFLGTRNPDKSNEKLPERILSGSSGSCSSCSISSSNGSSSRSSKQ.

Positions 1-21 (MFKFSIPLLLFIFLFFSCINS) are cleaved as a signal peptide. Positions 56–90 (SNEKLPERILSGSSGSCSSCSISSSNGSSSRSSKQ) are disordered. A compositionally biased stretch (low complexity) spans 66 to 90 (SGSSGSCSSCSISSSNGSSSRSSKQ). An N-linked (GlcNAc...) asparagine glycan is attached at asparagine 81.

This is an uncharacterized protein from Dictyostelium discoideum (Social amoeba).